Consider the following 81-residue polypeptide: Beta-defensin 34 (81 aa).

The signal sequence occupies residues 1–20; sequence MKTFLFLFAVLFFWSQPRMH. 3 cysteine pairs are disulfide-bonded: Cys-28-Cys-55, Cys-35-Cys-49, and Cys-39-Cys-56. Over residues 62 to 72 the composition is skewed to polar residues; sequence CGRSKGNQSDE. Residues 62 to 81 are disordered; that stretch reads CGRSKGNQSDEGSGHMGTRG.

It belongs to the beta-defensin family. Only expressed in epididymis (caput, corpus and cauda).

Its subcellular location is the secreted. In terms of biological role, has antibacterial activity. The chain is Beta-defensin 34 (Defb34) from Mus musculus (Mouse).